A 413-amino-acid polypeptide reads, in one-letter code: Putative syntaxin-5 (413 aa).

Over 1 to 391 (MSDFHNIRSR…RYLQNISKNR (391 aa)) the chain is Cytoplasmic. Positions 257 to 290 (KNRRDKFSSGAAVPMGLPSSSSGANVRSKLLQDD) are disordered. Positions 321 to 383 (LEYAQARSNT…DMAHSELVRY (63 aa)) constitute a t-SNARE coiled-coil homology domain. Residues 392 to 412 (WLMIQVFGVLMVFFVVFVLFL) traverse the membrane as a helical; Anchor for type IV membrane protein segment. A topological domain (extracellular) is located at residue Thr413.

It belongs to the syntaxin family.

The protein localises to the membrane. Potentially involved in docking of synaptic vesicles at presynaptic active zones. The chain is Putative syntaxin-5 (syx-5) from Caenorhabditis elegans.